The sequence spans 2034 residues: Pecanex-like protein 3 (2034 aa).

The next 2 helical transmembrane spans lie at 33-53 (CFHL…YMVL) and 54-74 (PPSL…FATI). The tract at residues 96-118 (STMGELEEEPAQGDSNPPRDPGV) is disordered. At S127 the chain carries Phosphoserine. A Phosphothreonine modification is found at T129. Disordered stretches follow at residues 193 to 242 (IGDL…PLLK), 260 to 517 (DRAL…LRPP), and 540 to 625 (VLPA…SHSR). Residues 294–303 (KAGSSDSCFS) show a composition bias toward polar residues. Residues 305–319 (TDRETLSSFKSEKTN) show a composition bias toward basic and acidic residues. N319 carries N-linked (GlcNAc...) asparagine glycosylation. Residue T370 is modified to Phosphothreonine. The span at 391-409 (PSKRQPPLRRHSPPGRAPR) shows a compositional bias: basic residues. S392 and S431 each carry phosphoserine. The segment covering 427–436 (GSELSPASSL) has biased composition (polar residues). A compositionally biased stretch (low complexity) spans 444–460 (TDSSSSTSCYSPESSRG). The segment covering 488–497 (TQRTPSTASA) has biased composition (polar residues). Residue S505 is modified to Phosphoserine. 7 helical membrane-spanning segments follow: residues 790–812 (VLEN…LLLL), 819–836 (IWVF…YSLL), 852–872 (WVIA…IWLL), 880–900 (PFPP…FFCA), 903–923 (VATV…LPQV), 946–968 (SPLT…YGFC), and 980–1000 (HVPV…YHLS). S1025 bears the Phosphoserine mark. The next 4 membrane-spanning stretches (helical) occupy residues 1053–1073 (LVMC…TVFI), 1078–1098 (VLGF…HYLL), 1244–1264 (FVLT…HAFA), and 1280–1300 (LLSG…VFIM). S1697 carries the post-translational modification Phosphoserine. A glycan (N-linked (GlcNAc...) asparagine) is linked at N1770. The segment at 1844–2034 (GGLTSLSNNP…AAQPLLEHQY (191 aa)) is disordered. Over residues 1890–1910 (RPPPLLQWPPPRLPGPPPASP) the composition is skewed to pro residues. S1909 bears the Phosphoserine mark. Positions 1925–1939 (GLLSSEGPSGKWSLG) are enriched in low complexity. The residue at position 1955 (S1955) is a Phosphoserine. The span at 1969-1978 (LSLSLSLSLS) shows a compositional bias: low complexity.

This sequence belongs to the pecanex family.

The protein localises to the membrane. The sequence is that of Pecanex-like protein 3 from Homo sapiens (Human).